We begin with the raw amino-acid sequence, 284 residues long: D-tagatose-1,6-bisphosphate aldolase subunit GatY (284 aa).

Asp82 serves as the catalytic Proton donor. The Zn(2+) site is built by His83 and His180. Gly181 provides a ligand contact to dihydroxyacetone phosphate. His208 provides a ligand contact to Zn(2+). Dihydroxyacetone phosphate-binding positions include 209–211 (GAS) and 230–233 (NVAT).

The protein belongs to the class II fructose-bisphosphate aldolase family. TagBP aldolase GatY subfamily. Forms a complex with GatZ. The cofactor is Zn(2+).

The enzyme catalyses D-tagatofuranose 1,6-bisphosphate = D-glyceraldehyde 3-phosphate + dihydroxyacetone phosphate. Its pathway is carbohydrate metabolism; D-tagatose 6-phosphate degradation; D-glyceraldehyde 3-phosphate and glycerone phosphate from D-tagatose 6-phosphate: step 2/2. In terms of biological role, catalytic subunit of the tagatose-1,6-bisphosphate aldolase GatYZ, which catalyzes the reversible aldol condensation of dihydroxyacetone phosphate (DHAP or glycerone-phosphate) with glyceraldehyde 3-phosphate (G3P) to produce tagatose 1,6-bisphosphate (TBP). Requires GatZ subunit for full activity and stability. Is involved in the catabolism of galactitol. This is D-tagatose-1,6-bisphosphate aldolase subunit GatY from Escherichia coli O45:K1 (strain S88 / ExPEC).